A 257-amino-acid chain; its full sequence is Zinc transporter ZupT (257 aa).

A run of 3 helical transmembrane segments spans residues leucine 5–glycine 25, valine 32–methionine 52, and glycine 61–leucine 81. Fe(2+) is bound by residues asparagine 120 and glutamate 123. Residues glutamate 123 and histidine 148 each coordinate Zn(2+). Fe(2+) is bound by residues asparagine 149, glutamate 152, and glutamate 181. Glutamate 152 serves as a coordination point for Zn(2+). Transmembrane regions (helical) follow at residues isoleucine 182–alanine 202, alanine 203–leucine 223, and glycine 236–isoleucine 256.

The protein belongs to the ZIP transporter (TC 2.A.5) family. ZupT subfamily.

The protein localises to the cell inner membrane. The catalysed reaction is Zn(2+)(in) = Zn(2+)(out). Its function is as follows. Mediates zinc uptake. May also transport other divalent cations. This is Zinc transporter ZupT from Salmonella arizonae (strain ATCC BAA-731 / CDC346-86 / RSK2980).